We begin with the raw amino-acid sequence, 329 residues long: Ribosomal RNA small subunit methyltransferase H (329 aa).

Residues Gly44–Tyr46, Asp62, Asp110, and Gln117 each bind S-adenosyl-L-methionine. Residues Ala297 to Ala329 are disordered.

It belongs to the methyltransferase superfamily. RsmH family.

The protein localises to the cytoplasm. It carries out the reaction cytidine(1402) in 16S rRNA + S-adenosyl-L-methionine = N(4)-methylcytidine(1402) in 16S rRNA + S-adenosyl-L-homocysteine + H(+). Its function is as follows. Specifically methylates the N4 position of cytidine in position 1402 (C1402) of 16S rRNA. This Rhodospirillum centenum (strain ATCC 51521 / SW) protein is Ribosomal RNA small subunit methyltransferase H.